The chain runs to 402 residues: TBC1 domain family member 20 (402 aa).

The segment at Met1–Lys27 is disordered. Residues Arg14–Ala26 show a composition bias toward basic and acidic residues. The 187-residue stretch at Leu59–His245 folds into the Rab-GAP TBC domain. 2 helical membrane-spanning segments follow: residues Leu237–Val257 and Phe366–Val386.

The protein localises to the membrane. Functionally, GTPase-activating protein specific for Rab1 and Rab2 small GTPase families for which it can accelerate the intrinsic GTP hydrolysis rate by more than five orders of magnitude. Also shows GAP activity for RAB18 GTPase. Promotes RAB18 dissociation from the endoplasmic reticulum (ER) membrane into the cytosol, probably through stimulating RAB18 GTP-hydrolysis. Involved in maintaining endoplasmic reticulum structure. The sequence is that of TBC1 domain family member 20 from Mus musculus (Mouse).